Consider the following 107-residue polypeptide: Cytochrome c2 (107 aa).

At glutamine 1 the chain carries Pyrrolidone carboxylic acid. Heme c is bound by residues cysteine 13, cysteine 16, histidine 17, and methionine 79.

The protein belongs to the cytochrome c family. In terms of processing, binds 1 heme c group covalently per subunit.

The protein localises to the periplasm. In terms of biological role, cytochrome c2 is found mainly in purple, non-sulfur, photosynthetic bacteria where it functions as the electron donor to the oxidized bacteriochlorophyll in the photophosphorylation pathway. However, it may also have a role in the respiratory chain and is found in some non-photosynthetic bacteria. This Rhodoplanes tepidamans (Rhodoplanes cryptolactis) protein is Cytochrome c2.